Here is a 364-residue protein sequence, read N- to C-terminus: Medium-wave-sensitive opsin 1 (364 aa).

A disordered region spans residues Met1–Thr23. Over Met1–Val52 the chain is Extracellular. The interval Glu17 to Pro43 is required for 11-cis-retinal regeneration. Asn34 is a glycosylation site (N-linked (GlcNAc...) asparagine). Residues Tyr53–Ala77 form a helical membrane-spanning segment. Over Thr78 to Asn89 the chain is Cytoplasmic. The helical transmembrane segment at Trp90 to Phe115 threads the bilayer. Residues Tyr116–Glu129 are Extracellular-facing. Cys126 and Cys203 are oxidised to a cystine. A helical membrane pass occupies residues Gly130 to Trp149. Residues Glu150–Leu168 are Cytoplasmic-facing. A helical transmembrane segment spans residues Ala169–Ser192. At Arg193 to Ser218 the chain is on the extracellular side. Residues Tyr219 to Ile246 traverse the membrane as a helical segment. At Arg247–Arg268 the chain is on the cytoplasmic side. Residues Met269–Thr292 form a helical membrane-spanning segment. Residues Ala293–His300 lie on the Extracellular side of the membrane. The chain crosses the membrane as a helical span at residues Pro301–Met325. Lys312 is modified (N6-(retinylidene)lysine). Topologically, residues Asn326–Ala364 are cytoplasmic.

The protein belongs to the G-protein coupled receptor 1 family. Opsin subfamily. As to quaternary structure, monomer. Homodimer. Homotetramer. Post-translationally, O-glycosylated. Phosphorylated on some or all of the serine and threonine residues present in the C-terminal region. In terms of tissue distribution, expressed in cone photoreceptor cells.

The protein localises to the membrane. Functionally, visual pigments are the light-absorbing molecules that mediate vision. They consist of an apoprotein, opsin, covalently linked to cis-retinal. May increase spectral sensitivity in dim light. The polypeptide is Medium-wave-sensitive opsin 1 (OPN1MW) (Oryctolagus cuniculus (Rabbit)).